Here is a 206-residue protein sequence, read N- to C-terminus: Large ribosomal subunit protein mL62 (206 aa).

Residues 1–29 constitute a mitochondrion transit peptide; that stretch reads MAATRCLRWGLSRAGVWLLPPPARCPRRA. Gln-90 is modified (N5-methylglutamine).

This sequence belongs to the prokaryotic/mitochondrial release factor family. Mitochondrion-specific ribosomal protein mL62 subfamily. In terms of assembly, component of the mitochondrial large ribosomal subunit (mt-LSU). Mature mammalian 55S mitochondrial ribosomes consist of a small (28S) and a large (39S) subunit. The 28S small subunit contains a 12S ribosomal RNA (12S mt-rRNA) and 30 different proteins. The 39S large subunit contains a 16S rRNA (16S mt-rRNA), a copy of mitochondrial valine transfer RNA (mt-tRNA(Val)), which plays an integral structural role, and 52 different proteins. In terms of processing, methylation of glutamine in the GGQ triplet by HEMK1. In terms of tissue distribution, down-regulated during the in vitro differentiation of HT29-D4 colon carcinoma cells.

Its subcellular location is the mitochondrion. The catalysed reaction is an N-acyl-L-alpha-aminoacyl-tRNA + H2O = an N-acyl-L-amino acid + a tRNA + H(+). In terms of biological role, essential peptidyl-tRNA hydrolase component of the mitochondrial large ribosomal subunit. Acts as a codon-independent translation release factor that has lost all stop codon specificity and directs the termination of translation in mitochondrion, possibly in case of abortive elongation. Involved in the hydrolysis of peptidyl-tRNAs that have been prematurely terminated and thus in the recycling of stalled mitochondrial ribosomes. This Homo sapiens (Human) protein is Large ribosomal subunit protein mL62.